A 228-amino-acid polypeptide reads, in one-letter code: Cytidylate kinase (228 aa).

Residue Gly-12–Thr-20 coordinates ATP.

The protein belongs to the cytidylate kinase family. Type 1 subfamily.

It is found in the cytoplasm. The catalysed reaction is CMP + ATP = CDP + ADP. The enzyme catalyses dCMP + ATP = dCDP + ADP. This is Cytidylate kinase from Pseudomonas putida (strain W619).